Consider the following 245-residue polypeptide: tRNA pseudouridine synthase A (245 aa).

Asp52 (nucleophile) is an active-site residue. Substrate is bound at residue Tyr110.

It belongs to the tRNA pseudouridine synthase TruA family. Homodimer.

It catalyses the reaction uridine(38/39/40) in tRNA = pseudouridine(38/39/40) in tRNA. Formation of pseudouridine at positions 38, 39 and 40 in the anticodon stem and loop of transfer RNAs. This Borrelia turicatae (strain 91E135) protein is tRNA pseudouridine synthase A.